Consider the following 348-residue polypeptide: Competence protein ComGA (348 aa).

Residue 145–152 (GATGSGKT) coordinates ATP.

The protein belongs to the GSP E family.

It is found in the cell membrane. Required for uptake of DNA by competent cells. The sequence is that of Competence protein ComGA (comGA) from Halalkalibacterium halodurans (strain ATCC BAA-125 / DSM 18197 / FERM 7344 / JCM 9153 / C-125) (Bacillus halodurans).